We begin with the raw amino-acid sequence, 124 residues long: MNVIQTIDAEQIGKLAEARAVPDFKPGDNLRVSVRVTEGERTRIQAFEGVCIARSNRGINSNFTVRKISYGEGVERVFPLYSPNVTEIAVTRRGVVRRAKLYYLRGRRGKSARIAEAARETNAD.

It belongs to the bacterial ribosomal protein bL19 family.

In terms of biological role, this protein is located at the 30S-50S ribosomal subunit interface and may play a role in the structure and function of the aminoacyl-tRNA binding site. This chain is Large ribosomal subunit protein bL19, found in Acidiphilium cryptum (strain JF-5).